Here is a 1038-residue protein sequence, read N- to C-terminus: uncharacterized protein (1038 aa).

A compositionally biased stretch (polar residues) spans 1–14; sequence MEENTAQKQSNATG. The segment at 1 to 100 is disordered; it reads MEENTAQKQS…QSENENYDFS (100 aa). The segment covering 58-71 has biased composition (basic and acidic residues); that stretch reads NPERELNSDGTDRI. Residues 72 to 83 show a composition bias toward acidic residues; that stretch reads IEEEEEEDDIEN. 3 positions are modified to phosphoserine: S112, S113, and S114. 5 disordered regions span residues 144-201, 360-381, 422-441, 454-526, and 556-575; these read GKDP…VKRR, ELDN…TEQA, SHSN…DEKL, QTTK…SGEL, and TNSE…QPGT. The span at 156–179 shows a compositional bias: low complexity; that stretch reads SSMASSSTRSSQSSQVSAIQPQSQ. A compositionally biased stretch (basic and acidic residues) spans 180 to 198; sequence DDNRVSDIRQMENRRELNV. Basic and acidic residues-rich tracts occupy residues 426-441 and 489-505; these read HSNE…DEKL and DAEK…EHHP. At S436 the chain carries Phosphoserine. A compositionally biased stretch (polar residues) spans 506 to 522; sequence SITSVNSPFLYSPSKQP. Phosphoserine is present on residues S618 and S856. Disordered regions lie at residues 803–864, 940–974, and 1005–1024; these read RGSL…ASAD, GEAP…SPAR, and KAKS…KESK. Over residues 826–859 the composition is skewed to low complexity; that stretch reads TLSLKTSTTGLSSHSKSAENNSTQQSTTSPSINS. A compositionally biased stretch (polar residues) spans 955–974; the sequence is VSTTTKLAKRITQPSLSPAR. The span at 1009–1020 shows a compositional bias: low complexity; sequence EQSNAKSSSSSI.

The protein localises to the cytoplasm. This is an uncharacterized protein from Schizosaccharomyces pombe (strain 972 / ATCC 24843) (Fission yeast).